The chain runs to 534 residues: Tyrosine-protein kinase Fyn (534 aa).

Gly-2 is lipidated: N-myristoyl glycine. 2 S-palmitoyl cysteine lipidation sites follow: Cys-3 and Cys-6. Thr-12 bears the Phosphothreonine; by PKC mark. Positions 15-39 are disordered; sequence TDERDGSLTQSSGYRYGTDPTPQHY. Residues 82-143 enclose the SH3 domain; that stretch reads TGVTLFEALY…PSNYVAPVDS (62 aa). In terms of domain architecture, SH2 spans 149–246; that stretch reads WYFGKLGRKD…GLCFNLTVIA (98 aa). The Protein kinase domain maps to 268–521; that stretch reads LFLEQKLGQG…YLQGFLEDYF (254 aa). ATP-binding positions include 274–282 and Lys-296; that span reads LGQGCFAEV. Asp-387 (proton acceptor) is an active-site residue. Tyr-417 carries the phosphotyrosine; by autocatalysis modification. Tyr-528 carries the phosphotyrosine modification.

It belongs to the protein kinase superfamily. Tyr protein kinase family. SRC subfamily. As to quaternary structure, associates through its SH3 domain, to the p85 subunit of phosphatidylinositol 3-kinase. The cofactor is Mn(2+). As to expression, thymus and spleen.

The protein resides in the cytoplasm. It localises to the nucleus. Its subcellular location is the cell membrane. The protein localises to the perikaryon. The enzyme catalyses L-tyrosyl-[protein] + ATP = O-phospho-L-tyrosyl-[protein] + ADP + H(+). With respect to regulation, inhibited by phosphorylation of Tyr-528 by leukocyte common antigen and activated by dephosphorylation of this site. Tyrosine-protein kinase implicated in the control of cell growth. Plays a role in the regulation of intracellular calcium levels. Required in brain development and mature brain function with important roles in the regulation of axon growth, axon guidance, and neurite extension. Role in CNTN1-mediated signaling. In Gallus gallus (Chicken), this protein is Tyrosine-protein kinase Fyn (FYN).